Here is a 64-residue protein sequence, read N- to C-terminus: Conotoxin Vc1.3 (64 aa).

The signal sequence occupies residues 1 to 21 (MGMRMMFTVFLLVVLATTVVS). A propeptide spanning residues 22–43 (FTSDRASDGRKAAASDLITLTI) is cleaved from the precursor. 2 disulfides stabilise this stretch: cysteine 46–cysteine 52 and cysteine 47–cysteine 60. Cysteine 60 bears the Cysteine amide mark.

The protein belongs to the conotoxin A superfamily. As to expression, expressed by the venom duct.

The protein resides in the secreted. Functionally, may act as a toxin. The protein is Conotoxin Vc1.3 of Conus victoriae (Queen Victoria cone).